An 89-amino-acid polypeptide reads, in one-letter code: Small ribosomal subunit protein uS15 (89 aa).

This sequence belongs to the universal ribosomal protein uS15 family. Part of the 30S ribosomal subunit. Forms a bridge to the 50S subunit in the 70S ribosome, contacting the 23S rRNA.

In terms of biological role, one of the primary rRNA binding proteins, it binds directly to 16S rRNA where it helps nucleate assembly of the platform of the 30S subunit by binding and bridging several RNA helices of the 16S rRNA. Forms an intersubunit bridge (bridge B4) with the 23S rRNA of the 50S subunit in the ribosome. The chain is Small ribosomal subunit protein uS15 from Salinispora arenicola (strain CNS-205).